Here is a 195-residue protein sequence, read N- to C-terminus: Pyruvoyl-dependent arginine decarboxylase AaxB (195 aa).

A Pyruvic acid (Ser) modification is found at S53.

This sequence belongs to the pyruvoyl-dependent arginine decarboxylase family. As to quaternary structure, trimer of an alpha-beta dimer. Pyruvate serves as cofactor.

It is found in the cytoplasm. The catalysed reaction is L-arginine + H(+) = agmatine + CO2. Functionally, part of the AaxABC system, catalyzes the decarboxylation of L-arginine. The arginine uptake by the bacterium in the macrophage may be a virulence factor against the host innate immune response. This is Pyruvoyl-dependent arginine decarboxylase AaxB (aaxB) from Chlamydia abortus (strain DSM 27085 / S26/3) (Chlamydophila abortus).